An 842-amino-acid polypeptide reads, in one-letter code: Leucine--tRNA ligase (842 aa).

A 'HIGH' region motif is present at residues 62–72 (PYPSGDLHMGH). The segment at 390 to 414 (GDEDPAETGVATAGEGTLKNSGELD) is disordered. The 'KMSKS' region signature appears at 607-611 (AMSKS). K610 lines the ATP pocket.

This sequence belongs to the class-I aminoacyl-tRNA synthetase family.

The protein resides in the cytoplasm. It carries out the reaction tRNA(Leu) + L-leucine + ATP = L-leucyl-tRNA(Leu) + AMP + diphosphate. The sequence is that of Leucine--tRNA ligase from Paenarthrobacter aurescens (strain TC1).